A 541-amino-acid polypeptide reads, in one-letter code: Thioredoxin reductase (541 aa).

FAD-binding positions include 51 to 52 (PG), 71 to 74 (DYVK), 87 to 88 (TC), 92 to 96 (GCVPK), A161, D357, and 364 to 366 (ELA). C88 and C93 are disulfide-bonded. Residues 438–452 (HRQKHIRAQKDEYDL) are loop important for the interaction with TRX1. H509 serves as a coordination point for FAD. H509 functions as the Proton acceptor in the catalytic mechanism. Cysteines 535 and 540 form a disulfide.

The protein belongs to the class-I pyridine nucleotide-disulfide oxidoreductase family. As to quaternary structure, homodimer. FAD serves as cofactor.

The protein localises to the cytoplasm. It catalyses the reaction [thioredoxin]-dithiol + NADP(+) = [thioredoxin]-disulfide + NADPH + H(+). Its function is as follows. Catalyzes the transfer of electrons from NADPH to thioredoxins TRX1, TRX2 and TRX3, which in turn act as reductants of disulfide containing proteins. Able to reduce nitroglutathione (GSNO), a compound involved in the transport of nitric oxide (NO); however, TRX1 is more efficient in reducing GSNO. Has no catalytic activity towards oxidized glutathione (GSSG). In Plasmodium falciparum (isolate FCH-5), this protein is Thioredoxin reductase.